Here is a 102-residue protein sequence, read N- to C-terminus: Large ribosomal subunit protein bL21 (102 aa).

The protein belongs to the bacterial ribosomal protein bL21 family. In terms of assembly, part of the 50S ribosomal subunit. Contacts protein L20.

In terms of biological role, this protein binds to 23S rRNA in the presence of protein L20. This chain is Large ribosomal subunit protein bL21, found in Listeria innocua serovar 6a (strain ATCC BAA-680 / CLIP 11262).